The following is a 62-amino-acid chain: Inner membrane protein p12 (62 aa).

Residues 16–36 form a helical membrane-spanning segment; sequence LLIVAIVVVIMAIMLYYFWWM.

Belongs to the asfivirus inner membrane protein p12 family. Homomultimer; disulfide-linked. Post-translationally, not glycosylated.

The protein localises to the virion membrane. The polypeptide is Inner membrane protein p12 (African swine fever virus (isolate Pig/Kenya/KEN-50/1950) (ASFV)).